Here is a 338-residue protein sequence, read N- to C-terminus: Glyceraldehyde-3-phosphate dehydrogenase (338 aa).

Residues 11–12 and G111 contribute to the NAD(+) site; that span reads TI. 140-142 provides a ligand contact to D-glyceraldehyde 3-phosphate; it reads SCN. Catalysis depends on C141, which acts as the Nucleophile. R169 provides a ligand contact to NAD(+). 195–196 contacts D-glyceraldehyde 3-phosphate; the sequence is HG. Q302 serves as a coordination point for NAD(+).

Belongs to the glyceraldehyde-3-phosphate dehydrogenase family. As to quaternary structure, homotetramer.

It is found in the cytoplasm. The catalysed reaction is D-glyceraldehyde 3-phosphate + phosphate + NADP(+) = (2R)-3-phospho-glyceroyl phosphate + NADPH + H(+). The enzyme catalyses D-glyceraldehyde 3-phosphate + phosphate + NAD(+) = (2R)-3-phospho-glyceroyl phosphate + NADH + H(+). The protein operates within carbohydrate degradation; glycolysis; pyruvate from D-glyceraldehyde 3-phosphate: step 1/5. This is Glyceraldehyde-3-phosphate dehydrogenase (gap) from Methanobacterium bryantii.